A 225-amino-acid polypeptide reads, in one-letter code: Endonuclease V (225 aa).

Mg(2+) contacts are provided by aspartate 43 and aspartate 110.

Belongs to the endonuclease V family. Requires Mg(2+) as cofactor.

The protein localises to the cytoplasm. It carries out the reaction Endonucleolytic cleavage at apurinic or apyrimidinic sites to products with a 5'-phosphate.. Functionally, DNA repair enzyme involved in the repair of deaminated bases. Selectively cleaves double-stranded DNA at the second phosphodiester bond 3' to a deoxyinosine leaving behind the intact lesion on the nicked DNA. This chain is Endonuclease V, found in Thermotoga petrophila (strain ATCC BAA-488 / DSM 13995 / JCM 10881 / RKU-1).